A 99-amino-acid chain; its full sequence is Large ribosomal subunit protein uL23 (99 aa).

The protein belongs to the universal ribosomal protein uL23 family. In terms of assembly, part of the 50S ribosomal subunit. Contacts protein L29, and trigger factor when it is bound to the ribosome.

Its function is as follows. One of the early assembly proteins it binds 23S rRNA. One of the proteins that surrounds the polypeptide exit tunnel on the outside of the ribosome. Forms the main docking site for trigger factor binding to the ribosome. This chain is Large ribosomal subunit protein uL23, found in Synechococcus sp. (strain JA-2-3B'a(2-13)) (Cyanobacteria bacterium Yellowstone B-Prime).